We begin with the raw amino-acid sequence, 210 residues long: MNKIPIKDLLNPQITDEFKSSILDINKKLFSICCNLPKLPESVTTEEEVELRDILGFLSRANKNRKISDEEKKLLQTTSQLTTTITVLLKEMRSIENDRSNYQLTQKNKSADGLVFNVVTQDMINKSTKPYRGHRFTKENVRILESWFAKNIENPYLDTKGLENLMKNTSLSRIQIKNWVSNRRRKEKTITIAPELADLLSGEPLAKKKE.

Methionine 1 bears the N-acetylmethionine mark. The tract at residues 1-102 (MNKIPIKDLL…RSIENDRSNY (102 aa)) is N-terminal domain. A flexible linker region spans residues 103–128 (QLTQKNKSADGLVFNVVTQDMINKST). Positions 129–191 (KPYRGHRFTK…NRRRKEKTIT (63 aa)) form a DNA-binding region, homeobox; TALE-type. The interval 190–210 (ITIAPELADLLSGEPLAKKKE) is C-terminal tail.

The protein belongs to the TALE/M-ATYP homeobox family.

It is found in the nucleus. In terms of biological role, mating type proteins are sequence specific DNA-binding proteins that act as master switches in yeast differentiation by controlling gene expression in a cell type-specific fashion. Silenced copy of ALPHA2 at HML. The sequence is that of Silenced mating-type protein ALPHA2 (HMLALPHA2) from Saccharomyces cerevisiae (strain ATCC 204508 / S288c) (Baker's yeast).